Consider the following 318-residue polypeptide: Ribosomal RNA small subunit methyltransferase H (318 aa).

Residues 38-40, aspartate 57, leucine 91, aspartate 105, and glutamine 112 each bind S-adenosyl-L-methionine; that span reads AGH.

It belongs to the methyltransferase superfamily. RsmH family.

Its subcellular location is the cytoplasm. It catalyses the reaction cytidine(1402) in 16S rRNA + S-adenosyl-L-methionine = N(4)-methylcytidine(1402) in 16S rRNA + S-adenosyl-L-homocysteine + H(+). In terms of biological role, specifically methylates the N4 position of cytidine in position 1402 (C1402) of 16S rRNA. This Clavibacter sepedonicus (Clavibacter michiganensis subsp. sepedonicus) protein is Ribosomal RNA small subunit methyltransferase H.